A 446-amino-acid chain; its full sequence is Na(+)-translocating NADH-quinone reductase subunit A (446 aa).

Belongs to the NqrA family. As to quaternary structure, composed of six subunits; NqrA, NqrB, NqrC, NqrD, NqrE and NqrF.

The catalysed reaction is a ubiquinone + n Na(+)(in) + NADH + H(+) = a ubiquinol + n Na(+)(out) + NAD(+). Its function is as follows. NQR complex catalyzes the reduction of ubiquinone-1 to ubiquinol by two successive reactions, coupled with the transport of Na(+) ions from the cytoplasm to the periplasm. NqrA to NqrE are probably involved in the second step, the conversion of ubisemiquinone to ubiquinol. The chain is Na(+)-translocating NADH-quinone reductase subunit A from Vibrio vulnificus (strain CMCP6).